A 302-amino-acid chain; its full sequence is Protoheme IX farnesyltransferase 1 (302 aa).

Helical transmembrane passes span 27–47 (VVAL…VTDF), 49–69 (WIQA…AAAF), 98–118 (SVAI…YAWV), 121–141 (LTAW…TMYL), 149–169 (IVIA…AVTG), 175–195 (AWLL…ALAI), 228–248 (LLTL…IYLF), and 281–301 (IYHL…GMVL).

It belongs to the UbiA prenyltransferase family. Protoheme IX farnesyltransferase subfamily.

The protein resides in the cell inner membrane. It catalyses the reaction heme b + (2E,6E)-farnesyl diphosphate + H2O = Fe(II)-heme o + diphosphate. It functions in the pathway porphyrin-containing compound metabolism; heme O biosynthesis; heme O from protoheme: step 1/1. Functionally, converts heme B (protoheme IX) to heme O by substitution of the vinyl group on carbon 2 of heme B porphyrin ring with a hydroxyethyl farnesyl side group. The polypeptide is Protoheme IX farnesyltransferase 1 (Vibrio parahaemolyticus serotype O3:K6 (strain RIMD 2210633)).